Consider the following 277-residue polypeptide: Phosphonates import ATP-binding protein PhnC 2 (277 aa).

One can recognise an ABC transporter domain in the interval 3 to 251 (ISLNGISVQH…LLQALYAQHL (249 aa)). 40–47 (GPSGAGKT) contributes to the ATP binding site.

The protein belongs to the ABC transporter superfamily. Phosphonates importer (TC 3.A.1.9.1) family. In terms of assembly, the complex is composed of two ATP-binding proteins (PhnC), two transmembrane proteins (PhnE) and a solute-binding protein (PhnD).

It localises to the cell inner membrane. It carries out the reaction phosphonate(out) + ATP + H2O = phosphonate(in) + ADP + phosphate + H(+). In terms of biological role, part of the ABC transporter complex PhnCDE involved in phosphonates import. Responsible for energy coupling to the transport system. The sequence is that of Phosphonates import ATP-binding protein PhnC 2 from Albidiferax ferrireducens (strain ATCC BAA-621 / DSM 15236 / T118) (Rhodoferax ferrireducens).